The primary structure comprises 293 residues: 4-hydroxy-tetrahydrodipicolinate synthase (293 aa).

T45 is a binding site for pyruvate. Y133 (proton donor/acceptor) is an active-site residue. Residue K161 is the Schiff-base intermediate with substrate of the active site. Pyruvate is bound at residue I204.

The protein belongs to the DapA family. As to quaternary structure, homotetramer; dimer of dimers.

It localises to the cytoplasm. It carries out the reaction L-aspartate 4-semialdehyde + pyruvate = (2S,4S)-4-hydroxy-2,3,4,5-tetrahydrodipicolinate + H2O + H(+). The protein operates within amino-acid biosynthesis; L-lysine biosynthesis via DAP pathway; (S)-tetrahydrodipicolinate from L-aspartate: step 3/4. In terms of biological role, catalyzes the condensation of (S)-aspartate-beta-semialdehyde [(S)-ASA] and pyruvate to 4-hydroxy-tetrahydrodipicolinate (HTPA). This is 4-hydroxy-tetrahydrodipicolinate synthase from Yersinia pseudotuberculosis serotype I (strain IP32953).